A 221-amino-acid polypeptide reads, in one-letter code: Late embryogenesis abundant protein, group 3 (221 aa).

Positions 1 to 221 (MASHQDKASY…KDSSTITRDH (221 aa)) are disordered. Over residues 33–42 (TAQHAKDRAA) the composition is skewed to basic and acidic residues. A compositionally biased stretch (low complexity) spans 43–52 (DAAGHAAGKG). Composition is skewed to basic and acidic residues over residues 53–63 (QDAKEATKQKA) and 72–147 (KKTD…KQKA). Residues 212-221 (KDSSTITRDH) are compositionally biased toward polar residues.

Belongs to the LEA type 4 family.

The protein is Late embryogenesis abundant protein, group 3 (MGL3) of Zea mays (Maize).